Consider the following 428-residue polypeptide: Enolase 1 (428 aa).

Residues 38 to 58 are disordered; the sequence is EVPSGASTGENEAVELRDGGS. Gln-163 contacts (2R)-2-phosphoglycerate. Glu-205 functions as the Proton donor in the catalytic mechanism. Residues Asp-242, Glu-286, and Asp-313 each coordinate Mg(2+). Residues Lys-338, Arg-367, Ser-368, and Lys-389 each contribute to the (2R)-2-phosphoglycerate site. Catalysis depends on Lys-338, which acts as the Proton acceptor.

It belongs to the enolase family. Requires Mg(2+) as cofactor.

It is found in the cytoplasm. The protein resides in the secreted. It localises to the cell surface. The enzyme catalyses (2R)-2-phosphoglycerate = phosphoenolpyruvate + H2O. It functions in the pathway carbohydrate degradation; glycolysis; pyruvate from D-glyceraldehyde 3-phosphate: step 4/5. Its function is as follows. Catalyzes the reversible conversion of 2-phosphoglycerate (2-PG) into phosphoenolpyruvate (PEP). It is essential for the degradation of carbohydrates via glycolysis. The polypeptide is Enolase 1 (Lactobacillus gasseri (strain ATCC 33323 / DSM 20243 / BCRC 14619 / CIP 102991 / JCM 1131 / KCTC 3163 / NCIMB 11718 / NCTC 13722 / AM63)).